The sequence spans 500 residues: MNYFPWLTIIVVFPIFAGSLIFFLPHKGNRVIRWYTICICILELLLTTYAFCYHFQSDDPLIQLVEDYKWINFFDFHWRLGIDGLSIGPILLTGFITTLATLAAWPVTRDSRLFHFLMLAMYSGQIGSFSSRDLLLFFIMWELELIPVYLLLCMWGGKKRLYSATKFILYTAGGSVFLLMGVLGLALYGSNEPTLNFETSVNQSYPVVLEIIFYIGFFIAFAVKSPIIPLHTWLPDTHGEAHYSTCMLLAGILLKMGAYGLIRINMELLPHAHSIFSPWLMIIGTIQIIYAALTSLGQRNLKKRIAYSSVSHMGFIIIGISSLTDTGLNGALLQIISHGFIGAALFFLAGTTYDRIRLVYLDEMGGIAIPMPKMFTMFSSFSMASLALPGMSGFVAELIVFFGIITGQKYLLIPKILITFVMAIGMILTPIYSLSMSRQMFYGYKLFNAPKDSFFDSGPRELFLSISIFLPVIGIGIYPDFVLSLAVDKVEVILSNFFYR.

The next 14 helical transmembrane spans lie at 4–24, 35–55, 87–107, 113–130, 134–154, 167–187, 208–228, 242–262, 274–294, 305–325, 330–350, 386–406, 411–431, and 462–482; these read FPWLTIIVVFPIFAGSLIFFL, YTICICILELLLTTYAFCYHF, IGPILLTGFITTLATLAAWPV, LFHFLMLAMYSGQIGSFS, LLLFFIMWELELIPVYLLLCM, FILYTAGGSVFLLMGVLGLAL, VLEIIFYIGFFIAFAVKSPII, HYSTCMLLAGILLKMGAYGLI, SIFSPWLMIIGTIQIIYAALT, IAYSSVSHMGFIIIGISSLTD, GALLQIISHGFIGAALFFLAG, LALPGMSGFVAELIVFFGIIT, LLIPKILITFVMAIGMILTPI, and LFLSISIFLPVIGIGIYPDFV.

This sequence belongs to the complex I subunit 4 family.

It is found in the plastid. It localises to the chloroplast thylakoid membrane. The enzyme catalyses a plastoquinone + NADH + (n+1) H(+)(in) = a plastoquinol + NAD(+) + n H(+)(out). It carries out the reaction a plastoquinone + NADPH + (n+1) H(+)(in) = a plastoquinol + NADP(+) + n H(+)(out). This Nicotiana tabacum (Common tobacco) protein is NAD(P)H-quinone oxidoreductase chain 4, chloroplastic (ndhD).